Consider the following 217-residue polypeptide: tRNA (guanine-N(7)-)-methyltransferase (217 aa).

The S-adenosyl-L-methionine site is built by glutamate 43, aspartate 68, asparagine 101, and asparagine 123. A substrate-binding site is contributed by lysine 127. The interaction with RNA stretch occupies residues 129-134 (RHNKRR). Residues aspartate 159 and 196–199 (TEYE) each bind substrate.

Belongs to the class I-like SAM-binding methyltransferase superfamily. TrmB family.

The catalysed reaction is guanosine(46) in tRNA + S-adenosyl-L-methionine = N(7)-methylguanosine(46) in tRNA + S-adenosyl-L-homocysteine. Its pathway is tRNA modification; N(7)-methylguanine-tRNA biosynthesis. Its function is as follows. Catalyzes the formation of N(7)-methylguanine at position 46 (m7G46) in tRNA. The sequence is that of tRNA (guanine-N(7)-)-methyltransferase from Clostridium botulinum (strain Loch Maree / Type A3).